We begin with the raw amino-acid sequence, 314 residues long: MARRRKGRPINGVILLDKPTGISSNDALQKVKRIFFAEKAGHTGALDPLATGMLPICLGEATKFSQFLLDSDKRYRVIAKLGERTDTSDSDGEVVETRPVDVNLEKLEACIDTFRGESDQVPSMFSALKYQGKPLYEYARKGIEVPRESRKITVYEIILHRFEGDEVEMEVHCSKGTYIRTIVDDLGEMLGCGAHVTMLRRTGVAKYPYEKMVTLEQLNELLEQAHRDEVAPKELLDPLLLPMDTAVEDLPEVNLKAELTNLVQHGMPVQVLGAPEGTPIRMTSGEDKLFIGVAEVNDDGKVAPKRLVVFRDEE.

Residue Asp-47 is the Nucleophile of the active site.

Belongs to the pseudouridine synthase TruB family. Type 1 subfamily.

The enzyme catalyses uridine(55) in tRNA = pseudouridine(55) in tRNA. Its function is as follows. Responsible for synthesis of pseudouridine from uracil-55 in the psi GC loop of transfer RNAs. This chain is tRNA pseudouridine synthase B, found in Vibrio campbellii (strain ATCC BAA-1116).